A 213-amino-acid polypeptide reads, in one-letter code: Heat shock protein 27 (213 aa).

Residues Ser-58 and Ser-75 each carry the phosphoserine modification. One can recognise a sHSP domain in the interval 71–182 (SRRASGGPNA…SERIVQIQQT (112 aa)). The interval 157-213 (VLTLKAPPPPSKEQAKSERIVQIQQTGPAHLSVKAPAPEAGDGKAENGSGEKMETSK) is disordered. Basic and acidic residues predominate over residues 197–213 (GDGKAENGSGEKMETSK).

This sequence belongs to the small heat shock protein (HSP20) family.

This Drosophila melanogaster (Fruit fly) protein is Heat shock protein 27 (Hsp27).